The primary structure comprises 255 residues: ATP synthase subunit a (255 aa).

Residues 1 to 6 (MNFIIN) constitute a propeptide, removed in mature form. 5 helical membrane-spanning segments follow: residues 32-52 (LTSFSIYSIAVVALILGFSIL), 91-111 (LFPFMFSLFMYILIANVVSLV), 121-141 (LIWTIGLSVAIWIGCTLTGLA), 159-200 (PLVP…LAGL), and 219-251 (LSILLGIVALESAIAFIQAIVFTILTCSYIKDA).

In terms of assembly, F-type ATP synthases have 2 components, the catalytic core F(1) and the membrane-embedded component F(0), linked together by a central stalk and a peripheral stalk. The central stalk, also called rotor shaft, is often seen as part of F(1). The peripheral stalk is seen as part of F(0). F(0) contains the membrane channel next to the rotor. F-type ATP synthases form dimers but each monomer functions independently in ATP generation. The dimer consists of 17 different polypeptides: ATP1 (subunit alpha, 3 molecules per monomer, part of F(1)), ATP2 (subunit beta, 3 copies per monomer, part of F(1)), ATP3 (subunit gamma, part of the central stalk), ATP4 (subunit b, part of the peripheral stalk), ATP5/OSCP (subunit 5/OSCP, part of the peripheral stalk), ATP6 (subunit a, part of the peripheral stalk), ATP7 (subunit d, part of the peripheral stalk), ATP8 (subunit 8, part of the peripheral stalk), OLI1 (subunit c, part of the rotor, 10 molecules per monomer), ATP14 (subunit h, part of the peripheral stalk), ATP15 (subunit epsilon, part of the central stalk), ATP16 (subunit delta, part of the central stalk), ATP17 (subunit f, part of the peripheral stalk), ATP18 (subunit i/j, part of the peripheral stalk), ATP19 (subunit k, dimer-specific, at interface between monomers), ATP20 (subunit g, at interface between monomers), TIM11 (subunit e, at interface between monomers).

The protein resides in the mitochondrion inner membrane. In terms of biological role, mitochondrial membrane ATP synthase (F(1)F(0) ATP synthase or Complex V) produces ATP from ADP in the presence of a proton gradient across the membrane which is generated by electron transport complexes of the respiratory chain. F-type ATP synthases consist of two structural domains, F(1) - containing the extramembraneous catalytic core, and F(0) - containing the membrane proton channel, linked together by a central stalk and a peripheral stalk. During catalysis, ATP synthesis in the catalytic domain of F(1) is coupled via a rotary mechanism of the central stalk subunits to proton translocation. Key component of the proton channel; it may play a direct role in the translocation of protons across the membrane. The protein is ATP synthase subunit a of Yarrowia lipolytica (strain CLIB 122 / E 150) (Yeast).